We begin with the raw amino-acid sequence, 244 residues long: Uridylate kinase (244 aa).

16–19 (KLSG) provides a ligand contact to ATP. G58 lines the UMP pocket. ATP is bound by residues G59 and R63. Residues D78 and 139 to 146 (VGAPYFTT) contribute to the UMP site. ATP contacts are provided by T166, Y172, and D175.

Belongs to the UMP kinase family. In terms of assembly, homohexamer.

Its subcellular location is the cytoplasm. The enzyme catalyses UMP + ATP = UDP + ADP. The protein operates within pyrimidine metabolism; CTP biosynthesis via de novo pathway; UDP from UMP (UMPK route): step 1/1. Inhibited by UTP. Its function is as follows. Catalyzes the reversible phosphorylation of UMP to UDP. This Novosphingobium aromaticivorans (strain ATCC 700278 / DSM 12444 / CCUG 56034 / CIP 105152 / NBRC 16084 / F199) protein is Uridylate kinase.